Here is a 728-residue protein sequence, read N- to C-terminus: Ubiquitin carboxyl-terminal hydrolase BAP1 (728 aa).

The region spanning 4–235 (GWLELESDPG…IRFNLMAVVP (232 aa)) is the UCH catalytic domain. The short motif at 56–60 (RRSRR) is the Arg-finger motif element. The active-site Nucleophile is the cysteine 91. The active-site Proton donor is the histidine 169. A disordered region spans residues 273 to 333 (THKSQESQLP…TTHSPPSKCK (61 aa)). Position 292 is a phosphoserine (serine 292). The HBM-like motif motif lies at 363-366 (NHNY). Residues serine 369 and serine 395 each carry the phosphoserine modification. 2 disordered regions span residues 372–436 (QEEE…DGQL) and 463–523 (SIKT…SPVT). Over residues 395 to 408 (SEDEDDYEDEDEDV) the composition is skewed to acidic residues. 2 stretches are compositionally biased toward polar residues: residues 427 to 436 (SLSNSSDGQL) and 479 to 523 (THSQ…SPVT). Threonine 492 carries the post-translational modification Phosphothreonine. 3 positions are modified to phosphoserine: serine 520, serine 536, and serine 584. The tract at residues 574-623 (LTEGGKGSSPSTRSSQGSQGSSGLEEKEVVEVTESRDKPGLNRSSEPLSG) is disordered. Over residues 581-596 (SSPSTRSSQGSQGSSG) the composition is skewed to low complexity. The interval 595–720 (SGLEEKEVVE…QRKPDRRKRS (126 aa)) is interaction with BRCA1. Residues 597 to 613 (LEEKEVVEVTESRDKPG) are compositionally biased toward basic and acidic residues. Residues 629 to 660 (KELLALLKCVEAEIANYEACLKEEVEKRKKFK) adopt a coiled-coil conformation. The tract at residues 641–685 (EIANYEACLKEEVEKRKKFKIDDQRRTHNYDEFICTFISMLAQEG) is interaction with YY1. Positions 669–697 (NYDEFICTFISMLAQEGMLANLVEQNISV) constitute a ULD domain. The interval 698–700 (RRR) is interaction with nucleosomal DNA forming a DNA clamp with ASXL1. The Classical bipartite Nuclear localization signal (NLS) motif lies at 698–721 (RRRQGVSIGRLHKQRKPDRRKRSR). A disordered region spans residues 702–728 (GVSIGRLHKQRKPDRRKRSRPYKAKRQ). Residues 712-728 (RKPDRRKRSRPYKAKRQ) are positively charged C-terminal extension (CTE). A Nuclear localization signal motif is present at residues 716–721 (RRKRSR). The short motif at 716–723 (RRKRSRPY) is the Non-classical PY-nuclear localization signal (PY-NLS) element.

Belongs to the peptidase C12 family. BAP1 subfamily. In terms of assembly, core component of the polycomb repressive deubiquitinase (PR-DUB) complex, at least composed of BAP1, one of ASXL1, ASXL2 or (probably) ASXL3, and one of MBD5 or MBD6. The PR-DUB core associates with a number of accessory proteins, including FOXK1, FOXK2, KDM1B, HCFC1, YY1 and OGT; KDM1B specifically associates with ASXL2 PR-DUB complexes. The BAP1 deubiquitinase activity is not required for PR-DUB assembly. Homodimerizes (via coiled-coil hinge-region between the UCH and ULD domains) to mediate assembly of 2 copies of the BAP1-ASXL heterodimer into a bisymmetric tetramer; dimerization enhances association with nucleosomes. The PR-DUB complex associates with nucleosomes to mediate deubiquitination of 'lys-120' of histone H2AK118ub1 substrates; the association requires the positively charged C-terminal tail of BAP1. Interacts (via ULD domain) with ASXL1 (via DEUBAD domain); the interaction is direct and forms a ubiquitin binding cleft. The interaction with ASXL1 stabilizes BAP1 but is not required for nucleosome binding. Associates (via C-terminus) with nucleosome and chromatosome complexes through direct interaction with DNA and the histone3/4 dimer; this association displaces the histone-2A C-terminal tail, extending and orienting the H2AK118ub1 substrate towards the BAP1 deubiquitinase active site. Also interacts (via arginine finger) directly with the histone H2A-H2B acidic patch; this interaction is not critical for nucleosome-chromatosome association but may play a role in orienting the H2AK118ub1 substrate towards the PR-DUB complex active site. Interacts with BRCA1 (via the RING finger). Interacts (via HBM-like motif) with HCFC1. Interacts (via a C-terminal region overlapping the ULD domain) with YY1; the interaction is direct and requires the interaction with HCFC1. Interacts (when phosphorylated at Thr-492) with FOXK1. Interacts (when phosphorylated at Thr-492) with FOXK2; leading to recruitment of the PR-DUB complex and repression of FOXK2 target genes. Interacts (via non-classical PY-NLS) with TNPO1/transportin-1 (via HEAT repeats 8-12); the interaction is direct, mediates BAP1 nuclear localization and disrupts BAP1 homodimerization. Interacts (via C-terminus) with KPNA1/importin alpha5 and KPNA2/importin alpha1; these interactions can contribute to BAP1 nuclear localization but are less important than the interaction with TNPO1/transportin-1. The interaction with TNPO1/transportin-1 disrupts homodimerization and blocks ubiquitination by UBE2O. In terms of processing, ubiquitinated: monoubiquitinated at multiple sites within its nuclear localization signal (NLS) BY UBE2O, leading to cytoplasmic retention. Able to mediate autodeubiquitination via intramolecular interactions to counteract cytoplasmic retention. Monoubiquitinated on at least 4 sites near or within its PY-NLS. Highly expressed in mammary glands, testis and ovary. Up-regulated in mammary glands during puberty, pregnancy, and as a result of parity.

The protein localises to the cytoplasm. The protein resides in the nucleus. It is found in the chromosome. The enzyme catalyses Thiol-dependent hydrolysis of ester, thioester, amide, peptide and isopeptide bonds formed by the C-terminal Gly of ubiquitin (a 76-residue protein attached to proteins as an intracellular targeting signal).. In terms of biological role, deubiquitinating enzyme that plays a key role in chromatin by mediating deubiquitination of histone H2A and HCFC1. Catalytic component of the polycomb repressive deubiquitinase (PR-DUB) complex, a complex that specifically mediates deubiquitination of histone H2A monoubiquitinated at 'Lys-120' (H2AK119ub1). Does not deubiquitinate monoubiquitinated histone H2B. The PR-DUB complex is an epigenetic regulator of gene expression and acts as a transcriptional coactivator, affecting genes involved in development, cell communication, signaling, cell proliferation and cell viability. Antagonizes PRC1 mediated H2AK119ub1 monoubiquitination. As part of the PR-DUB complex, associates with chromatin enriched in histone marks H3K4me1, H3K4me3, and H3K27Ac, but not in H3K27me3. Acts as a regulator of cell growth by mediating deubiquitination of HCFC1 N-terminal and C-terminal chains, with some specificity toward 'Lys-48'-linked polyubiquitin chains compared to 'Lys-63'-linked polyubiquitin chains. Deubiquitination of HCFC1 does not lead to increase stability of HCFC1. Interferes with the BRCA1 and BARD1 heterodimer activity by inhibiting their ability to mediate ubiquitination and autoubiquitination. It however does not mediate deubiquitination of BRCA1 and BARD1. Able to mediate autodeubiquitination via intramolecular interactions to counteract monoubiquitination at the nuclear localization signal (NLS), thereby protecting it from cytoplasmic sequestration. Negatively regulates epithelial-mesenchymal transition (EMT) of trophoblast stem cells during placental development by regulating genes involved in epithelial cell integrity, cell adhesion and cytoskeletal organization. In Mus musculus (Mouse), this protein is Ubiquitin carboxyl-terminal hydrolase BAP1 (Bap1).